The sequence spans 544 residues: Tyrosyl-DNA phosphodiesterase 1 (544 aa).

Catalysis depends on His-182, which acts as the Nucleophile. Substrate is bound at residue Lys-184. Residues 312 to 316 form an interaction with DNA region; the sequence is SIGTS. His-432 acts as the Proton donor/acceptor in catalysis. Lys-434 serves as a coordination point for substrate.

This sequence belongs to the tyrosyl-DNA phosphodiesterase family.

It is found in the nucleus. In terms of biological role, DNA repair enzyme that can remove a variety of covalent adducts from DNA through hydrolysis of a 3'-phosphodiester bond, giving rise to DNA with a free 3' phosphate. Catalyzes the hydrolysis of dead-end complexes between DNA and the topoisomerase I active site tyrosine residue. Hydrolyzes 3'-phosphoglycolates on protruding 3' ends on DNA double-strand breaks due to DNA damage by radiation and free radicals. Also cleaves 5' phosphotyrosyl adducts resulting from dead-end complexes between DNA and the active site tyrosine of topoisomerase II. Contributes to DNA repair after radiation damage. Acts on blunt-ended double-strand DNA breaks and on single-stranded DNA. May have low 3'exonuclease activity and may be able to remove a single nucleoside from the 3'end of DNA and RNA molecules with 3'hydroxyl groups. Has no exonuclease activity towards DNA or RNA with a 3'phosphate. This chain is Tyrosyl-DNA phosphodiesterase 1 (TDP1), found in Saccharomyces cerevisiae (strain ATCC 204508 / S288c) (Baker's yeast).